The chain runs to 279 residues: Proteasome subunit beta 2 (279 aa).

A propeptide spans 1–53 (MAAAFDPSGRFPDLFTSVGTSSFSAFLSKAAPELLPGRRPLPPGMATGLTPHA) (removed in mature form; by autocatalysis). The active-site Nucleophile is the T54.

Belongs to the peptidase T1B family. In terms of assembly, the 20S proteasome core is composed of 14 alpha and 14 beta subunits that assemble into four stacked heptameric rings, resulting in a barrel-shaped structure. The two inner rings, each composed of seven catalytic beta subunits, are sandwiched by two outer rings, each composed of seven alpha subunits. The catalytic chamber with the active sites is on the inside of the barrel. Has a gated structure, the ends of the cylinder being occluded by the N-termini of the alpha-subunits. Is capped by the proteasome-associated ATPase, ARC.

Its subcellular location is the cytoplasm. The enzyme catalyses Cleavage of peptide bonds with very broad specificity.. Its pathway is protein degradation; proteasomal Pup-dependent pathway. With respect to regulation, the formation of the proteasomal ATPase ARC-20S proteasome complex, likely via the docking of the C-termini of ARC into the intersubunit pockets in the alpha-rings, may trigger opening of the gate for substrate entry. Interconversion between the open-gate and close-gate conformations leads to a dynamic regulation of the 20S proteasome proteolysis activity. Component of the proteasome core, a large protease complex with broad specificity involved in protein degradation. This chain is Proteasome subunit beta 2, found in Salinispora tropica (strain ATCC BAA-916 / DSM 44818 / JCM 13857 / NBRC 105044 / CNB-440).